The sequence spans 316 residues: Transaldolase B (316 aa).

The Schiff-base intermediate with substrate role is filled by lysine 131.

It belongs to the transaldolase family. Type 1 subfamily. In terms of assembly, homodimer.

The protein resides in the cytoplasm. It catalyses the reaction D-sedoheptulose 7-phosphate + D-glyceraldehyde 3-phosphate = D-erythrose 4-phosphate + beta-D-fructose 6-phosphate. The protein operates within carbohydrate degradation; pentose phosphate pathway; D-glyceraldehyde 3-phosphate and beta-D-fructose 6-phosphate from D-ribose 5-phosphate and D-xylulose 5-phosphate (non-oxidative stage): step 2/3. In terms of biological role, transaldolase is important for the balance of metabolites in the pentose-phosphate pathway. The chain is Transaldolase B (talB) from Pasteurella multocida (strain Pm70).